The sequence spans 1885 residues: Chitin synthase 5 (1885 aa).

The Myosin motor domain maps to 1–789; sequence MATRGNVPAH…SIALTGSQAA (789 aa). 99–106 contacts ATP; that stretch reads GESGSGKT. 2 N-linked (GlcNAc...) asparagine glycosylation sites follow: N219 and N429. The disordered stretch occupies residues 601–649; sequence KPLRMPSVSRKKHDQLRRMASRRADRSPAPQEEEPLPGTEEAKVRRTKP. The span at 609–621 shows a compositional bias: basic residues; that stretch reads SRKKHDQLRRMAS. The interval 666–690 is actin-binding; the sequence is LDNITKSLTAPNVNNYFVFCLKPND. N668 carries N-linked (GlcNAc...) asparagine glycosylation. The interval 794-817 is disordered; sequence GDIGSPSRPDTPGHNPFSDSKARL. Helical transmembrane passes span 894 to 914 and 929 to 949; these read WLAIVYFLTWYLPDFAIKWIG and FAINLLIWLSCGLVVFFIIVF. In terms of domain architecture, Cytochrome b5 heme-binding spans 957 to 1016; sequence QNVYSAAELSAHDGKGKHSAYVAIRGQVFDLGAFMPNHYPKIIPQSSLKKYAGVDATGLF. 2 N-linked (GlcNAc...) asparagine glycosylation sites follow: N1043 and N1068. A helical membrane pass occupies residues 1205–1225; that stretch reads ILLAVSILLCSVIGFKFFAAL. N-linked (GlcNAc...) asparagine glycosylation is found at N1462 and N1568. Helical transmembrane passes span 1599-1619, 1626-1646, and 1653-1673; these read LLSTVVAPVTVAYIAYLIVLL, VPLTAFILLGAIYGLQAIIFI, and MIGWMIVYILAMPVFSLGLPL. Residues N1759 and N1790 are each glycosylated (N-linked (GlcNAc...) asparagine). Residues 1827-1882 form the DEK-C domain; sequence LPTDDMLLNEIRDILRTADLMTVTKKGIKQELERRFNVNLDMKRAYIGSATEAILS.

The protein in the N-terminal section; belongs to the TRAFAC class myosin-kinesin ATPase superfamily. Myosin family. In the C-terminal section; belongs to the chitin synthase family. Class V subfamily. In terms of processing, maximal activity requires trypsin activation, suggesting a zymogenic nature.

Its subcellular location is the cell membrane. It localises to the membrane. The catalysed reaction is [(1-&gt;4)-N-acetyl-beta-D-glucosaminyl](n) + UDP-N-acetyl-alpha-D-glucosamine = [(1-&gt;4)-N-acetyl-beta-D-glucosaminyl](n+1) + UDP + H(+). Functionally, polymerizes chitin, a structural polymer of the cell wall and septum, by transferring the sugar moiety of UDP-GlcNAc to the non-reducing end of the growing chitin polymer. CHS5 is required for the sustained growth at 37 degrees Celsius and is of critical importance for virulence. Especially important at infection temperatures for maintaining the cell wall integrity of developing yeast buds, elongating tips of hyphae, and random sites of expansion in sclerotic forms. This chain is Chitin synthase 5, found in Exophiala dermatitidis (strain ATCC 34100 / CBS 525.76 / NIH/UT8656) (Black yeast).